Here is a 292-residue protein sequence, read N- to C-terminus: Putative gonadotropin-releasing hormone II receptor (292 aa).

Residues 1–28 lie on the Extracellular side of the membrane; that stretch reads MSAGNGTPWDATWNITVQWLAVDIACRT. Cysteine 26 and cysteine 101 are disulfide-bonded. Residues 29 to 49 traverse the membrane as a helical segment; it reads LMFLKLMATYSAAFLPVVIGL. Residues 50-67 are Cytoplasmic-facing; the sequence is DRQAAVLNPLGSRSGVRK. A helical membrane pass occupies residues 68–88; it reads LLGAAWGLSFLLAFPQLFLFH. Over 89-115 the chain is Extracellular; the sequence is TVHCAGPVPFTQCVTKGSFKAQWQETT. Residues 116–136 traverse the membrane as a helical segment; the sequence is YNLFTFCCLFLLPLTAMAICY. Over 137-177 the chain is Cytoplasmic; sequence SRIVLSVSRPQTRKGSHAPAGEFALPRSFDNCPRVRLRALR. Residues 178–198 traverse the membrane as a helical segment; sequence LALLILLTFILCWTPYYLLGM. Topologically, residues 199 to 216 are extracellular; the sequence is WYWFSPTMLTEVPPSLSH. A helical membrane pass occupies residues 217-237; that stretch reads ILFLLGLLNAPLDPLLYGAFT. Residues 238-292 lie on the Cytoplasmic side of the membrane; that stretch reads LGCRRGHQELSIDSSKEGSGRMLQEEIHAFRQLEVQKTVTSRRAGETKGISITSI.

It belongs to the G-protein coupled receptor 1 family. In terms of processing, phosphorylated on the C-terminal cytoplasmic tail. Expressed in many tissues.

The protein resides in the cell membrane. Its function is as follows. Putative receptor for gonadotropin releasing hormone II (GnRH II) which is most probably non-functional. In Homo sapiens (Human), this protein is Putative gonadotropin-releasing hormone II receptor (GNRHR2).